The primary structure comprises 168 residues: Cytochrome c-type biogenesis protein CcmE (168 aa).

Over 1–23 (MTTAPSGLPGTPLPPARRRERPR) the chain is Cytoplasmic. The chain crosses the membrane as a helical; Signal-anchor for type II membrane protein span at residues 24-44 (WPLLVAGAAVLGLIGYMVLGN). The Extracellular portion of the chain corresponds to 45-168 (ANSNLVYYVL…KILNDQSTKP (124 aa)). Heme is bound by residues histidine 137 and tyrosine 141. Positions 145–168 (DSKGEGQYSQDDLKKILNDQSTKP) are disordered.

This sequence belongs to the CcmE/CycJ family.

It is found in the cell membrane. Heme chaperone required for the biogenesis of c-type cytochromes. Transiently binds heme delivered by CcmC and transfers the heme to apo-cytochromes in a process facilitated by CcmF and CcmH. The chain is Cytochrome c-type biogenesis protein CcmE from Deinococcus radiodurans (strain ATCC 13939 / DSM 20539 / JCM 16871 / CCUG 27074 / LMG 4051 / NBRC 15346 / NCIMB 9279 / VKM B-1422 / R1).